A 264-amino-acid polypeptide reads, in one-letter code: 3-methyl-2-oxobutanoate hydroxymethyltransferase (264 aa).

The Mg(2+) site is built by Asp-45 and Asp-84. Residues 45 to 46, Asp-84, and Lys-112 each bind 3-methyl-2-oxobutanoate; that span reads DS. Residue Glu-114 participates in Mg(2+) binding. The active-site Proton acceptor is Glu-181.

The protein belongs to the PanB family. Homodecamer; pentamer of dimers. Mg(2+) serves as cofactor.

The protein localises to the cytoplasm. It catalyses the reaction 3-methyl-2-oxobutanoate + (6R)-5,10-methylene-5,6,7,8-tetrahydrofolate + H2O = 2-dehydropantoate + (6S)-5,6,7,8-tetrahydrofolate. It participates in cofactor biosynthesis; (R)-pantothenate biosynthesis; (R)-pantoate from 3-methyl-2-oxobutanoate: step 1/2. Functionally, catalyzes the reversible reaction in which hydroxymethyl group from 5,10-methylenetetrahydrofolate is transferred onto alpha-ketoisovalerate to form ketopantoate. This chain is 3-methyl-2-oxobutanoate hydroxymethyltransferase, found in Escherichia coli O157:H7.